The sequence spans 296 residues: Cytidine deaminase (296 aa).

CMP/dCMP-type deaminase domains follow at residues 47 to 167 and 186 to 296; these read TEAE…FGPK and DSAD…IDPV. 88-90 lines the substrate pocket; sequence NLE. Residue histidine 101 coordinates Zn(2+). Glutamate 103 serves as the catalytic Proton donor. Residues cysteine 128 and cysteine 131 each contribute to the Zn(2+) site.

Belongs to the cytidine and deoxycytidylate deaminase family. As to quaternary structure, homodimer. The cofactor is Zn(2+).

The enzyme catalyses cytidine + H2O + H(+) = uridine + NH4(+). It carries out the reaction 2'-deoxycytidine + H2O + H(+) = 2'-deoxyuridine + NH4(+). Functionally, this enzyme scavenges exogenous and endogenous cytidine and 2'-deoxycytidine for UMP synthesis. The sequence is that of Cytidine deaminase from Shewanella baltica (strain OS155 / ATCC BAA-1091).